The chain runs to 412 residues: Adenosine receptor A2a (412 aa).

At 1–7 the chain is on the extracellular side; sequence MPIMGSS. A helical transmembrane segment spans residues 8-32; the sequence is VYITVELAIAVLAILGNVLVCWAVW. At 33–42 the chain is on the cytoplasmic side; the sequence is LNSNLQNVTN. Residues 43 to 66 form a helical membrane-spanning segment; that stretch reads YFVVSLAAADIAVGVLAIPFAITI. The Extracellular segment spans residues 67–77; the sequence is STGFCAACHGC. Intrachain disulfides connect C71-C159, C74-C146, and C77-C166. Residues 78-100 traverse the membrane as a helical segment; the sequence is LFIACFVLVLTQSSIFSLLAIAI. Residues 101-120 are Cytoplasmic-facing; sequence DRYIAIRIPLRYNGLVTGTR. Residues 121-143 form a helical membrane-spanning segment; it reads AKGIIAICWVLSFAIGLTPMLGW. The Extracellular portion of the chain corresponds to 144 to 173; sequence NNCGQPKEGKNHSQGCGEGQVACLFEDVVP. N154 carries an N-linked (GlcNAc...) asparagine glycan. Residue E169 participates in adenosine binding. The chain crosses the membrane as a helical span at residues 174–198; sequence MNYMVYFNFFACVLVPLLLMLGVYL. Topologically, residues 199 to 234 are cytoplasmic; that stretch reads RIFLAARRQLKQMESQPLPGERARSTLQKEVHAAKS. The chain crosses the membrane as a helical span at residues 235–258; sequence LAIIVGLFALCWLPLHIINCFTFF. N253 provides a ligand contact to adenosine. The cysteines at positions 259 and 262 are disulfide-linked. The Extracellular segment spans residues 259–266; the sequence is CPDCSHAP. Residues 267-290 form a helical membrane-spanning segment; sequence LWLMYLAIVLSHTNSVVNPFIYAY. Adenosine contacts are provided by S277 and H278. The Cytoplasmic segment spans residues 291-412; the sequence is RIREFRQTFR…PLAQDGAGVS (122 aa). The tract at residues 391–412 is disordered; that stretch reads KGVCPEPPGLDDPLAQDGAGVS.

Belongs to the G-protein coupled receptor 1 family. In terms of assembly, interacts (via cytoplasmic C-terminal domain) with USP4; the interaction is direct. May interact with DRD4. Interacts with NECAB2. Interacts (via cytoplasmic C-terminal domain) with GAS2L2; interaction enhances receptor-mediated adenylyl cyclase activity. Ubiquitinated. Deubiquitinated by USP4; leading to stabilization and expression at the cell surface.

The protein resides in the cell membrane. In terms of biological role, receptor for adenosine. The activity of this receptor is mediated by G proteins which activate adenylyl cyclase. The chain is Adenosine receptor A2a (ADORA2A) from Homo sapiens (Human).